A 180-amino-acid polypeptide reads, in one-letter code: UPF0149 protein XAC3406 (180 aa).

It belongs to the UPF0149 family.

This Xanthomonas axonopodis pv. citri (strain 306) protein is UPF0149 protein XAC3406.